Reading from the N-terminus, the 654-residue chain is Fructose-1,6-bisphosphatase class 3 (654 aa).

The disordered stretch occupies residues 288 to 307 (NPAFKPKKRPDKHERLTQRE). The span at 298 to 307 (DKHERLTQRE) shows a compositional bias: basic and acidic residues.

Belongs to the FBPase class 3 family. Mn(2+) serves as cofactor.

The catalysed reaction is beta-D-fructose 1,6-bisphosphate + H2O = beta-D-fructose 6-phosphate + phosphate. The protein operates within carbohydrate biosynthesis; gluconeogenesis. This is Fructose-1,6-bisphosphatase class 3 from Staphylococcus aureus (strain USA300).